The primary structure comprises 308 residues: Probable manganese-dependent inorganic pyrophosphatase (308 aa).

Residues histidine 9, aspartate 13, aspartate 15, aspartate 75, histidine 97, and aspartate 149 each coordinate Mn(2+).

Belongs to the PPase class C family. It depends on Mn(2+) as a cofactor.

It localises to the cytoplasm. The catalysed reaction is diphosphate + H2O = 2 phosphate + H(+). The polypeptide is Probable manganese-dependent inorganic pyrophosphatase (Staphylococcus carnosus (strain TM300)).